The chain runs to 321 residues: Methionyl-tRNA formyltransferase (321 aa).

111–114 contributes to the (6S)-5,6,7,8-tetrahydrofolate binding site; it reads SLLP.

This sequence belongs to the Fmt family.

It catalyses the reaction L-methionyl-tRNA(fMet) + (6R)-10-formyltetrahydrofolate = N-formyl-L-methionyl-tRNA(fMet) + (6S)-5,6,7,8-tetrahydrofolate + H(+). In terms of biological role, attaches a formyl group to the free amino group of methionyl-tRNA(fMet). The formyl group appears to play a dual role in the initiator identity of N-formylmethionyl-tRNA by promoting its recognition by IF2 and preventing the misappropriation of this tRNA by the elongation apparatus. In Bifidobacterium animalis subsp. lactis (strain AD011), this protein is Methionyl-tRNA formyltransferase.